The chain runs to 642 residues: A-kinase anchor protein 8-like (642 aa).

The interval 1 to 269 is sufficient for activation of CTE-mediated expression; sequence MSYTGFVQGS…MRRTWKTWTT (269 aa). Arg209 bears the Asymmetric dimethylarginine; alternate mark. Arg209 carries the omega-N-methylarginine; alternate modification. An omega-N-methylarginine mark is found at Arg218, Arg238, and Arg248. Position 258 is an N6-acetyllysine (Lys258). The tract at residues 265–382 is disordered; it reads KTWTTADFRT…QDKQKKRQRD (118 aa). A Phosphothreonine modification is found at Thr268. Residues 275–280 carry the Nuclear localization signal motif; that stretch reads KKKKRK. Positions 281–297 match the Nuclear export signal (NES) motif; that stretch reads QGGSPDEPDSKATRTDC. At Ser284 the chain carries Phosphoserine. The segment covering 288-297 has biased composition (basic and acidic residues); that stretch reads PDSKATRTDC. Thr293 is modified (phosphothreonine). Ser298 is modified (phosphoserine). A compositionally biased stretch (acidic residues) spans 299–315; the sequence is DNSDSDNDEGTEGEAAE. The segment covering 338–350 has biased composition (basic and acidic residues); it reads EDGREEGKEDPEK. The Nuclear localization signal signature appears at 363 to 365; sequence KRK. C2H2 AKAP95-type zinc fingers lie at residues 392–414 and 485–508; these read CSLC…SKFH and CAAC…TMDH. The tract at residues 546–642 is disordered; the sequence is GENPFTDNPE…EDDEEGGGGP (97 aa). Residues 553-564 are compositionally biased toward acidic residues; that stretch reads NPEEEKEQDEVE. A compositionally biased stretch (pro residues) spans 585–605; that stretch reads AQPPVPLEPAPGTTTPPPPPP. The segment covering 631–642 has biased composition (acidic residues); it reads DMEDDEEGGGGP.

The protein belongs to the AKAP95 family. Interacts (via N-terminus) with DHX9 (via RGG region). Interacts with TMPO isoform Beta, PRPF40A, RNF43, lamin-B. Interacts with HDAC3; increased during mitosis. Phosphorylated on serine or threonine residues possibly by PKA.

It localises to the nucleus. Its subcellular location is the nucleus matrix. The protein resides in the nucleus speckle. It is found in the PML body. The protein localises to the cytoplasm. Functionally, could play a role in constitutive transport element (CTE)-mediated gene expression by association with DHX9. Increases CTE-dependent nuclear unspliced mRNA export. Proposed to target PRKACA to the nucleus but does not seem to be implicated in the binding of regulatory subunit II of PKA. May be involved in nuclear envelope breakdown and chromatin condensation. May be involved in anchoring nuclear membranes to chromatin in interphase and in releasing membranes from chromating at mitosis. May regulate the initiation phase of DNA replication when associated with TMPO isoform Beta. Required for cell cycle G2/M transition and histone deacetylation during mitosis. In mitotic cells recruits HDAC3 to the vicinity of chromatin leading to deacetylation and subsequent phosphorylation at 'Ser-10' of histone H3; in this function seems to act redundantly with AKAP8. May be involved in regulation of pre-mRNA splicing. This chain is A-kinase anchor protein 8-like (Akap8l), found in Mus musculus (Mouse).